We begin with the raw amino-acid sequence, 368 residues long: Type 2 DNA topoisomerase 6 subunit A (368 aa).

Positions 9–148 constitute a Topo IIA-type catalytic domain; the sequence is PDTEEAREQL…FHMRPEESGA (140 aa). The active-site O-(5'-phospho-DNA)-tyrosine intermediate is Tyr103. Mg(2+) contacts are provided by Glu201 and Asp253.

It belongs to the TOP6A family. In terms of assembly, homodimer. Heterotetramer of two Top6A and two Top6B chains. Requires Mg(2+) as cofactor.

It catalyses the reaction ATP-dependent breakage, passage and rejoining of double-stranded DNA.. Its function is as follows. Relaxes both positive and negative superturns and exhibits a strong decatenase activity. The chain is Type 2 DNA topoisomerase 6 subunit A from Haloarcula marismortui (strain ATCC 43049 / DSM 3752 / JCM 8966 / VKM B-1809) (Halobacterium marismortui).